We begin with the raw amino-acid sequence, 991 residues long: Gingipain R1 (991 aa).

Residues 1-24 (MKNLNKFVSIALCSSLLGGMAFAQ) form the signal peptide. Positions 25–227 (QTELGRNPNV…RMFMNYEPGR (203 aa)) are excised as a propeptide. The Ca(2+) site is built by aspartate 305, valine 327, aspartate 330, tyrosine 332, glutamate 334, glutamate 388, and histidine 393. Histidine 438 acts as the Proton donor in catalysis. The active-site Nucleophile is cysteine 471. Ca(2+) is bound by residues phenylalanine 476, glutamate 485, aspartate 519, glutamate 520, glutamate 523, and histidine 529.

This sequence belongs to the peptidase C25 family.

The protein localises to the secreted. The catalysed reaction is Hydrolysis of proteins and small molecule substrates, with a preference for Arg in P1.. Its activity is regulated as follows. Requires cysteine for activation and Ca(2+) and/or Mg(2+) for stabilization. It is stimulated by glycine-containing dipeptides. It is resistant to inhibition by proteinase inhibitors in human plasma. Functionally, thiol protease. Acts synergistically with RgpB to catalyze the maturation of fimbrial subunits, such as FimA. Its proteolytic activity is a major factor in both periodontal tissue destruction and in evasion of host defense mechanisms. The protein is Gingipain R1 (rgpA) of Porphyromonas gingivalis (Bacteroides gingivalis).